The chain runs to 366 residues: RISC-loading complex subunit TARBP2 (366 aa).

Sufficient for interaction with PRKRA regions lie at residues 22-105 (MLAA…EPAL), 152-234 (SPQQ…DARD), and 287-366 (LGAL…AGSK). A DRBM 1 domain is found at 30–97 (TPISLLQEYG…AEVALKHLKG (68 aa)). Residue serine 152 is modified to Phosphoserine. DRBM domains are found at residues 159–227 (NPVG…RVHT) and 293–361 (ACCR…YLKI). The tract at residues 228–366 (VPLDARDGNE…QYLKIMAGSK (139 aa)) is sufficient for interaction with DICER1.

This sequence belongs to the TARBP2 family. As to quaternary structure, self-associates. Component of the RISC loading complex (RLC), or micro-RNA (miRNA) loading complex (miRLC), which is composed of DICER1, AGO2 and TARBP2. Note that the trimeric RLC/miRLC is also referred to as RISC. Interacts with EIF2AK2/PKR and inhibits its protein kinase activity. Interacts with DHX9 and PRKRA. Interacts with DICER1, AGO2, MOV10, EIF6 and RPL7A (60S ribosome subunit); they form a large RNA-induced silencing complex (RISC). Interacts with IRF7; this interaction prevents IRF7 phosphorylation and activation. In terms of assembly, (Microbial infection) Interacts with FTSJ3; forms a complex with FTSJ3 and HIV-1 TAR RNA. (Microbial infection) Interacts with ebolavirus VP30; this interaction, which occurs only in the presence of siRNA, prevents TARBP2 binding to DICER1 and thus allows the virus to counteract host RNA silencing. As to quaternary structure, (Microbial infection) Interacts with ebolavirus VP35; this interaction prevents TARBP2 binding to DICER1 and thus allows the virus to counteract host RNA silencing.

It is found in the cytoplasm. Its subcellular location is the perinuclear region. It localises to the nucleus. Its function is as follows. Required for formation of the RNA induced silencing complex (RISC). Component of the RISC loading complex (RLC), also known as the micro-RNA (miRNA) loading complex (miRLC), which is composed of DICER1, AGO2 and TARBP2. Within the RLC/miRLC, DICER1 and TARBP2 are required to process precursor miRNAs (pre-miRNAs) to mature miRNAs and then load them onto AGO2. AGO2 bound to the mature miRNA constitutes the minimal RISC and may subsequently dissociate from DICER1 and TARBP2. May also play a role in the production of short interfering RNAs (siRNAs) from double-stranded RNA (dsRNA) by DICER1. Binds in vitro to the PRM1 3'-UTR. Seems to act as a repressor of translation. For some pre-miRNA substrates, may also alter the choice of cleavage site by DICER1. Negatively regulates IRF7-mediated IFN-beta signaling triggered by viral infection by inhibiting the phosphorylation of IRF7 and promoting its 'Lys'-48-linked ubiquitination and degradation. In terms of biological role, (Microbial infection) Binds to the HIV-1 TAR RNA which is located in the long terminal repeat (LTR) of HIV-1, and stimulates translation of TAR-containing RNAs. This is achieved in part at least by binding to and inhibiting EIF2AK2/PKR, thereby reducing phosphorylation and inhibition of EIF2S1/eIF-2-alpha. May also promote translation of TAR-containing RNAs independently of EIF2AK2/PKR. Mediates recruitment of FTSJ3 methyltransferase to HIV-1 RNA, leading to 2'-O-methylation of the viral genome, allowing HIV-1 to escape the innate immune system. The sequence is that of RISC-loading complex subunit TARBP2 from Homo sapiens (Human).